The sequence spans 228 residues: MKVAADLSAFMDRLGHRFTTPEHLVRALTHSSLGSATRPDNQRLEFLGDRVLGLSMAEALFHADGRASEGQLAPRFNALVRKETCAAVARDIDLGAVLKLGRSEMMSGGRRKDALLGDAMEAVIAAVYLDAGFEVARALVLRLWAARIQSVDNDARDPKTALQEWAQARGLPPPRYETLGRDGPDHAPQFRIAVVLASGETEEAQAGSKRNAEQAAAKALLERLERGA.

Residues 7 to 132 (LSAFMDRLGH…VIAAVYLDAG (126 aa)) form the RNase III domain. Glu45 lines the Mg(2+) pocket. Asp49 is an active-site residue. Mg(2+) is bound by residues Asp118 and Glu121. Glu121 is an active-site residue. Positions 157-226 (DPKTALQEWA…AKALLERLER (70 aa)) constitute a DRBM domain.

Belongs to the ribonuclease III family. Homodimer. Mg(2+) serves as cofactor.

The protein localises to the cytoplasm. The enzyme catalyses Endonucleolytic cleavage to 5'-phosphomonoester.. Digests double-stranded RNA. Involved in the processing of ribosomal RNA precursors and of some mRNAs. Complements an E.coli disruption mutant, but the E.coli enzyme does not cleave R.capsulatus rRNA precursor, showing substrate recognition is different. Probably also processes some mRNAs, and tRNAs when they are encoded in the rRNA operon. Probably processes pre-crRNA and tracrRNA of type II CRISPR loci if present in the organism. The chain is Ribonuclease 3 (rnc) from Rhodobacter capsulatus (Rhodopseudomonas capsulata).